The chain runs to 3068 residues: Highly reducing polyketide synthase 17 (3068 aa).

A Ketosynthase family 3 (KS3) domain is found at 100-526 (IEPIAIVGAS…GTNAHAIMER (427 aa)). Catalysis depends on for beta-ketoacyl synthase activity residues Cys274, His410, and His449. Residues 627-938 (YVFTGQGAQW…LAGPIRQCLA (312 aa)) form a malonyl-CoA:ACP transacylase (MAT) domain region. Ser721 functions as the For malonyltransferase activity in the catalytic mechanism. The segment at 1027–1160 (HHLLGVRMTE…GVVEGVMTLD (134 aa)) is N-terminal hotdog fold. A dehydratase (DH) domain region spans residues 1027 to 1311 (HHLLGVRMTE…RASNIDMTIV (285 aa)). In terms of domain architecture, PKS/mFAS DH spans 1027 to 1334 (HHLLGVRMTE…SRSLAAHVDG (308 aa)). Catalysis depends on His1059, which acts as the Proton acceptor; for dehydratase activity. The interval 1179 to 1334 (NRTMVIPEEL…SRSLAAHVDG (156 aa)) is C-terminal hotdog fold. Catalysis depends on Asp1247, which acts as the Proton donor; for dehydratase activity. An enoylreductase (ER) domain region spans residues 1735-2037 (LGPVQSSKGD…LVRQGGKVIL (303 aa)). The segment at 2062 to 2240 (AAYVVAGGMG…FLSMNIGWIE (179 aa)) is catalytic ketoreductase (KR) domain. The 79-residue stretch at 2345 to 2423 (TIIDFISSAI…DLAEKVASRS (79 aa)) folds into the Carrier domain. The residue at position 2383 (Ser2383) is an O-(pantetheine 4'-phosphoryl)serine. Positions 2831–3062 (FDVASLGLRS…SCMITSLLED (232 aa)) are choline/carnitine acyltransferase (cAT) domain.

Its pathway is secondary metabolite biosynthesis. In terms of biological role, highly reducing polyketide synthase; part of the gene cluster that mediates the biosynthesis of (2Z,4E,6E,10E)-9-hydroxydodeca-2,4,6,10-tetraenoic acid (BAA), (2E,4E,6E,10E)-9-hydroxydodeca-2,4,6,10-tetraenoic acid (BAB), and (2Z,4E,6E)-octa-2,4,6-trienedioic acid (PBA). The highly reducing polyketide synthase Ba17a is sufficent to produce PBA and BAA. The still to be characterized protein Ba17b leads to an increased production of BAA as well as to the production of the new compound BAB. BAA does not possess insecticidal activity against G.mellonella larvae, however, both BAA and BAB increase the growth of Candida albicans and BAA can mitigate the fungicidal effects of fluconazole over C.albicans, suggesting that generalist pathogens such as M.anisopliae, can potentially manipulate the yeast microbiota found in arthropods (and anywhere else) by the activity of compounds as BAA and BAB. This Metarhizium anisopliae (Entomophthora anisopliae) protein is Highly reducing polyketide synthase 17.